Here is a 538-residue protein sequence, read N- to C-terminus: Sterile alpha motif domain-containing protein 1 (538 aa).

Residues 1–11 are compositionally biased toward pro residues; that stretch reads MAGPPALPPPE. Disordered regions lie at residues 1-30 and 92-247; these read MAGP…ASPH and SYRN…GAAR. Positions 12–29 are enriched in low complexity; it reads TAAAATTAAAASSSAASP. The region spanning 23-99 is the SAMD1-like winged helix (WH) domain; it reads SSSAASPHYQ…SISYRNAARV (77 aa). The residue at position 107 (Thr-107) is a Phosphothreonine. Positions 115–125 are enriched in low complexity; the sequence is PRGAPAAAAAA. Residues 126–139 are compositionally biased toward pro residues; the sequence is APPPTPAPPPPPAP. Residues 140–158 are compositionally biased toward low complexity; that stretch reads VAAAAPARAPRAAAAAATA. The residue at position 161 (Ser-161) is a Phosphoserine. Over residues 168 to 177 the composition is skewed to low complexity; the sequence is GPRAQRAAPL. Over residues 178 to 236 the composition is skewed to pro residues; that stretch reads AAPPPAPAAPPAVAPPAGPRRAPPPAVAAREPPLPPPPQPPAPPQQQQPPPPQPQPPPE. Positions 237–247 are enriched in low complexity; that stretch reads GGAVRAGGAAR. A Phosphoserine modification is found at Ser-261. Positions 282-291 are enriched in basic and acidic residues; sequence AARGRLERTR. The segment at 282-458 is disordered; the sequence is AARGRLERTR…PPGRKEKPSD (177 aa). Residues 328–351 are compositionally biased toward acidic residues; it reads KEEEEDDDEDEDEEDDVSEGSEVP. Positions 425–436 are enriched in pro residues; the sequence is SPSPVPLPPGKP. Residues 462 to 530 enclose the SAM domain; it reads WTVMDVVEYF…KVLQQGHFED (69 aa).

Homopolymerize into a closed pentameric ring. Interacts (via SAM domain) with L3MBTL3 (via SAM domain); the interaction mediates L3MBTL3 binding to chromatin. Interacts (via WH domain) with KDM1A; the interaction modulates KDM1A function. As to expression, expressed in atherosclerotic lesions, not in normal intima. Expressed in foam cells.

Its subcellular location is the nucleus. The protein resides in the chromosome. It is found in the secreted. Functionally, unmethylated CpG islands (CGIs)-binding protein which localizes to H3K4me3-decorated CGIs, where it acts as a transcriptional repressor. Tethers L3MBTL3 to chromatin and interacts with the KDM1A histone demethylase complex to modulate H3K4me2 and H3K4me3 levels at CGIs. Plays a role in atherogenesis by binding with LDL on cell surface and promoting LDL oxidation which leads to the formation of foam cell. The polypeptide is Sterile alpha motif domain-containing protein 1 (Homo sapiens (Human)).